Here is a 199-residue protein sequence, read N- to C-terminus: BREX protein BrxA (199 aa).

The protein belongs to the BrxA family.

Its function is as follows. BREX systems (bacteriophage exclusion) provide immunity against bacteriophage. Part of a type 1 BREX system which protects against dsDNA phage. This system allows phage adsorption but prevents phage DNA replication, without degradation of the phage DNA. Methylation of bacterial DNA by PglX guides self/non-self discrimination. The polypeptide is BREX protein BrxA (Paramagnetospirillum magneticum (strain ATCC 700264 / AMB-1) (Magnetospirillum magneticum)).